Consider the following 899-residue polypeptide: Linoleate 13S-lipoxygenase 2-1, chloroplastic (899 aa).

The N-terminal 40 residues, 1-40 (MLKPQLQQSSQSTKALIPSWNTNPLFLASFPINILNKNFR), are a transit peptide targeting the chloroplast. In terms of domain architecture, PLAT spans 78 to 200 (VQKQVNLNLS…DNPDKRIFFT (123 aa)). A Lipoxygenase domain is found at 203–899 (SYLPSQTPSG…GKGVPYSISI (697 aa)). The interval 252–287 (SNNDDAKRPVLGGKELPYPRRCKTGRPRSKKDPLSE) is disordered. Residues 271–280 (RRCKTGRPRS) are compositionally biased toward basic residues. Positions 557, 562, 749, 753, and 899 each coordinate Fe cation.

Belongs to the lipoxygenase family. In terms of assembly, monomer. Fe cation is required as a cofactor. Expressed in leaves and floral buds.

The protein resides in the plastid. It localises to the chloroplast stroma. The protein localises to the chloroplast thylakoid. The catalysed reaction is (9Z,12Z)-octadecadienoate + O2 = (13S)-hydroperoxy-(9Z,11E)-octadecadienoate. It catalyses the reaction (9Z,12Z,15Z)-octadecatrienoate + O2 = (13S)-hydroperoxy-(9Z,11E,15Z)-octadecatrienoate. Its pathway is lipid metabolism; oxylipin biosynthesis. Plant lipoxygenase involved in a number of diverse aspects of plant physiology including growth and development, pest resistance, and senescence. May not be involved in the bulk production of jasmonate upon wounding. Catalyzes the hydroperoxidation of lipids containing a cis,cis-1,4-pentadiene structure. Linolenic acid is the preferred substrate, before linoleic and arachidonic acids. Also has some activity with phosphatidylglycerol, but not with galactolipids. This Solanum tuberosum (Potato) protein is Linoleate 13S-lipoxygenase 2-1, chloroplastic.